We begin with the raw amino-acid sequence, 288 residues long: ATP synthase gamma chain (288 aa).

The protein belongs to the ATPase gamma chain family. In terms of assembly, F-type ATPases have 2 components, CF(1) - the catalytic core - and CF(0) - the membrane proton channel. CF(1) has five subunits: alpha(3), beta(3), gamma(1), delta(1), epsilon(1). CF(0) has three main subunits: a, b and c.

The protein resides in the cell inner membrane. Its function is as follows. Produces ATP from ADP in the presence of a proton gradient across the membrane. The gamma chain is believed to be important in regulating ATPase activity and the flow of protons through the CF(0) complex. This is ATP synthase gamma chain from Glaesserella parasuis serovar 5 (strain SH0165) (Haemophilus parasuis).